Here is a 1022-residue protein sequence, read N- to C-terminus: Histone-lysine N-methyltransferase TRX1 (1022 aa).

The tract at residues 31–151 is disordered; that stretch reads SSAPCPLPKK…QRQGVHKEAA (121 aa). Residues 65–78 are compositionally biased toward pro residues; it reads EGPPPSPATAPPML. The segment covering 127–139 has biased composition (basic and acidic residues); it reads GGAERRGYFSEPK. The 64-residue stretch at 264–327 folds into the PWWP domain; the sequence is PGDLVWAKLT…LKQAVPFLNG (64 aa). Basic and acidic residues predominate over residues 367–393; that stretch reads SMEKGSSDANSNKDVHSCDNLSEDKTA. The disordered stretch occupies residues 367-399; it reads SMEKGSSDANSNKDVHSCDNLSEDKTAESGGDY. The FYR N-terminal domain maps to 402 to 461; it reads MTPIELGNLRVSKLGRIVTDSDYFHNKKHIWPEGYTAFRKFRSVKDPHVVILYKMEVLRN. Positions 465-548 constitute an FYR C-terminal domain; that stretch reads KARPLFRVTS…SCLKYFENAG (84 aa). The segment at 553–609 adopts a Phorbol-ester/DAG-type zinc-finger fold; sequence GYRAVHVNWKDLDYCSVCDMDEEYEDNLFLQCDKCRMMVHARCYGELEPLNGVLWLC. PHD-type zinc fingers lie at residues 564–615 and 677–744; these read LDYC…CRPE and LLCS…KKHR. The extended PHD domain (ePHD) stretch occupies residues 620–744; it reads SPRCCLCPVT…RLLSYCKKHR (125 aa). One can recognise an SET domain in the interval 861–979; sequence RRLAFGKSRI…PWEELTYDYR (119 aa). Residue Cys-943 participates in Zn(2+) binding. Residue Tyr-978 participates in S-adenosyl-L-methionine binding. Positions 985–1001 constitute a Post-SET domain; that stretch reads QRLPCYCGFPKCRGVVN. Zn(2+) is bound by residues Cys-989, Cys-991, and Cys-996.

The protein belongs to the class V-like SAM-binding methyltransferase superfamily. Histone-lysine methyltransferase family. TRX/MLL subfamily. In terms of assembly, interacts with EHD3. As to expression, expressed in leaf blades and panicles.

The protein localises to the nucleus. The catalysed reaction is L-lysyl(4)-[histone H3] + S-adenosyl-L-methionine = N(6)-methyl-L-lysyl(4)-[histone H3] + S-adenosyl-L-homocysteine + H(+). Its function is as follows. Possesses histone H3 methyltransferase activity in vitro. Methylates 'Lys-4' of histone H3. H3 'Lys-4' methylation represents a specific tag for epigenetic transcriptional activation. Functions as a receptor for the lipid messenger phosphatidylinositol 5-phosphate (PI5P), which negatively regulates its transcriptional activation activity. Involved in the regulation of flowering time and floral induction under long day (LD) conditions. Acts as an activator of flowering under LD conditions. May function through binding to EHD3, a repressor of GHD7. In Oryza sativa subsp. japonica (Rice), this protein is Histone-lysine N-methyltransferase TRX1.